The sequence spans 302 residues: Protein translocase subunit SecF (302 aa).

6 consecutive transmembrane segments (helical) span residues 12–32, 138–158, 166–186, 190–210, 249–269, and 272–292; these read FFIY…FVKG, YAWY…TIRF, AILA…LFGI, LTAI…TIVV, FLVV…FAFG, and VGVI…VIGM.

This sequence belongs to the SecD/SecF family. SecF subfamily. As to quaternary structure, forms a complex with SecD. Part of the essential Sec protein translocation apparatus which comprises SecA, SecYEG and auxiliary proteins SecDF. Other proteins may also be involved.

The protein resides in the cell inner membrane. In terms of biological role, part of the Sec protein translocase complex. Interacts with the SecYEG preprotein conducting channel. SecDF uses the proton motive force (PMF) to complete protein translocation after the ATP-dependent function of SecA. The chain is Protein translocase subunit SecF from Petrotoga mobilis (strain DSM 10674 / SJ95).